A 272-amino-acid polypeptide reads, in one-letter code: Pantothenate synthetase (272 aa).

27–34 (MGALHNGH) serves as a coordination point for ATP. Residue histidine 34 is the Proton donor of the active site. (R)-pantoate is bound at residue glutamine 58. Position 58 (glutamine 58) interacts with beta-alanine. 143-146 (GKKD) is an ATP binding site. Glutamine 149 lines the (R)-pantoate pocket. ATP-binding positions include valine 172 and 180-183 (LSSR).

Belongs to the pantothenate synthetase family. As to quaternary structure, homodimer.

It localises to the cytoplasm. It carries out the reaction (R)-pantoate + beta-alanine + ATP = (R)-pantothenate + AMP + diphosphate + H(+). The protein operates within cofactor biosynthesis; (R)-pantothenate biosynthesis; (R)-pantothenate from (R)-pantoate and beta-alanine: step 1/1. Functionally, catalyzes the condensation of pantoate with beta-alanine in an ATP-dependent reaction via a pantoyl-adenylate intermediate. The sequence is that of Pantothenate synthetase from Aliarcobacter butzleri (strain RM4018) (Arcobacter butzleri).